The sequence spans 53 residues: MPQLNPEPWLTTFLIVWISLIVILQPKIASLMLTSSPTPYKAMTIKTWPWPWT.

The helical transmembrane segment at 8–24 threads the bilayer; the sequence is PWLTTFLIVWISLIVIL.

Belongs to the ATPase protein 8 family. Component of the ATP synthase complex composed at least of ATP5F1A/subunit alpha, ATP5F1B/subunit beta, ATP5MC1/subunit c (homooctomer), MT-ATP6/subunit a, MT-ATP8/subunit 8, ATP5ME/subunit e, ATP5MF/subunit f, ATP5MG/subunit g, ATP5MK/subunit k, ATP5MJ/subunit j, ATP5F1C/subunit gamma, ATP5F1D/subunit delta, ATP5F1E/subunit epsilon, ATP5PF/subunit F6, ATP5PB/subunit b, ATP5PD/subunit d, ATP5PO/subunit OSCP. ATP synthase complex consists of a soluble F(1) head domain (subunits alpha(3) and beta(3)) - the catalytic core - and a membrane F(0) domain - the membrane proton channel (subunits c, a, 8, e, f, g, k and j). These two domains are linked by a central stalk (subunits gamma, delta, and epsilon) rotating inside the F1 region and a stationary peripheral stalk (subunits F6, b, d, and OSCP).

The protein resides in the mitochondrion membrane. Functionally, subunit 8, of the mitochondrial membrane ATP synthase complex (F(1)F(0) ATP synthase or Complex V) that produces ATP from ADP in the presence of a proton gradient across the membrane which is generated by electron transport complexes of the respiratory chain. ATP synthase complex consist of a soluble F(1) head domain - the catalytic core - and a membrane F(1) domain - the membrane proton channel. These two domains are linked by a central stalk rotating inside the F(1) region and a stationary peripheral stalk. During catalysis, ATP synthesis in the catalytic domain of F(1) is coupled via a rotary mechanism of the central stalk subunits to proton translocation. In vivo, can only synthesize ATP although its ATP hydrolase activity can be activated artificially in vitro. Part of the complex F(0) domain. In Alligator mississippiensis (American alligator), this protein is ATP synthase F(0) complex subunit 8.